The primary structure comprises 374 residues: Putative phosphoserine aminotransferase (374 aa).

An L-glutamate-binding site is contributed by arginine 48. Pyridoxal 5'-phosphate contacts are provided by residues 82–83, phenylalanine 106, threonine 152, aspartate 174, and glutamine 197; that span reads AT. Lysine 198 carries the N6-(pyridoxal phosphate)lysine modification. 249 to 250 serves as a coordination point for pyridoxal 5'-phosphate; that stretch reads NT.

This sequence belongs to the class-V pyridoxal-phosphate-dependent aminotransferase family. SerC subfamily. In terms of assembly, homodimer. Pyridoxal 5'-phosphate is required as a cofactor.

Its subcellular location is the cytoplasm. The catalysed reaction is O-phospho-L-serine + 2-oxoglutarate = 3-phosphooxypyruvate + L-glutamate. It catalyses the reaction 4-(phosphooxy)-L-threonine + 2-oxoglutarate = (R)-3-hydroxy-2-oxo-4-phosphooxybutanoate + L-glutamate. The protein operates within amino-acid biosynthesis; L-serine biosynthesis; L-serine from 3-phospho-D-glycerate: step 2/3. Its pathway is cofactor biosynthesis; pyridoxine 5'-phosphate biosynthesis; pyridoxine 5'-phosphate from D-erythrose 4-phosphate: step 3/5. Functionally, catalyzes the reversible conversion of 3-phosphohydroxypyruvate to phosphoserine and of 3-hydroxy-2-oxo-4-phosphonooxybutanoate to phosphohydroxythreonine. The protein is Putative phosphoserine aminotransferase of Mycolicibacterium paratuberculosis (strain ATCC BAA-968 / K-10) (Mycobacterium paratuberculosis).